The following is a 631-amino-acid chain: Nucleoside triphosphatase I (631 aa).

Positions 42–204 (FLGLDSMHSL…TMLVNLLRPG (163 aa)) constitute a Helicase ATP-binding domain. 55–62 (HETGVGKT) serves as a coordination point for ATP. The short motif at 141–144 (DECH) is the DEXH box element. One can recognise a Helicase C-terminal domain in the interval 367 to 532 (KFIDVCLGIL…EFVQLFRVFK (166 aa)). Residues 457–524 (DIFILDMTWN…EIIQSKSKEF (68 aa)) form a binding to the cap-specific mRNA (nucleoside-2'-O-)-methyltransferase region.

Belongs to the helicase family. NPH I subfamily. As to quaternary structure, monomer. Interacts (via C-terminus) with RAP94/OPG109 (via N-terminus). Interacts with the cap-specific mRNA (nucleoside-2'-O-)-methyltransferase OPG102.

Its subcellular location is the virion. The catalysed reaction is a ribonucleoside 5'-triphosphate + H2O = a ribonucleoside 5'-diphosphate + phosphate + H(+). Its function is as follows. DNA-dependent ATPase that acts as a 5' to 3' translocase on single-stranded DNA and thereby plays a role in transcription termination of viral early genes. Uses forward translocation in concert with the viral RNA polymerase RAP94/OPG109 subunit and the capping enzyme/VTF to catalyze release of UUUUUNU-containing nascent RNA from the elongation complex. In addition, acts as a positive elongation factor to assist transcription through problematic sequences. This is Nucleoside triphosphatase I (OPG123) from Variola virus (isolate Human/India/Ind3/1967) (VARV).